A 402-amino-acid polypeptide reads, in one-letter code: Sensor protein kinase FleS (402 aa).

Residues Ser-188 to Pro-393 form the Histidine kinase domain. His-191 bears the Phosphohistidine; by autocatalysis mark.

The catalysed reaction is ATP + protein L-histidine = ADP + protein N-phospho-L-histidine.. Its function is as follows. Member of the two-component regulatory system FleS/FleR that regulates the expression of multiple genes involved in flagellar synthesis, adhesion, swarming, motility and antibiotic resistance. May function as a membrane-associated protein kinase that phosphorylates FleR in response to environmental signals leading to activation of specific gene promoters. The protein is Sensor protein kinase FleS (fleS) of Pseudomonas aeruginosa (strain ATCC 15692 / DSM 22644 / CIP 104116 / JCM 14847 / LMG 12228 / 1C / PRS 101 / PAO1).